A 146-amino-acid chain; its full sequence is Core protein D2 (146 aa).

It belongs to the orthopoxvirus OPG114 family. In terms of assembly, part of a complex composed of the kinase OPG054, OPG092, OPG100, OPG114, OPG115, OPG142 and OPG157.

It is found in the virion. In terms of biological role, late protein which is part of a large complex required for early virion morphogenesis. This complex participates in the formation of virosomes and the incorporation of virosomal contents into nascent immature virions. This chain is Core protein D2 (OPG114), found in Homo sapiens (Human).